A 215-amino-acid chain; its full sequence is UPF0502 protein YceH (215 aa).

Belongs to the UPF0502 family.

The protein is UPF0502 protein YceH of Salmonella arizonae (strain ATCC BAA-731 / CDC346-86 / RSK2980).